The chain runs to 250 residues: Triosephosphate isomerase (250 aa).

9–11 contacts substrate; that stretch reads NWK. Residue His-94 is the Electrophile of the active site. Glu-166 acts as the Proton acceptor in catalysis. Substrate contacts are provided by residues Gly-172, Ser-211, and 232 to 233; that span reads GG.

This sequence belongs to the triosephosphate isomerase family. As to quaternary structure, homodimer.

It is found in the cytoplasm. It carries out the reaction D-glyceraldehyde 3-phosphate = dihydroxyacetone phosphate. It participates in carbohydrate biosynthesis; gluconeogenesis. The protein operates within carbohydrate degradation; glycolysis; D-glyceraldehyde 3-phosphate from glycerone phosphate: step 1/1. Involved in the gluconeogenesis. Catalyzes stereospecifically the conversion of dihydroxyacetone phosphate (DHAP) to D-glyceraldehyde-3-phosphate (G3P). The polypeptide is Triosephosphate isomerase (Methylococcus capsulatus (strain ATCC 33009 / NCIMB 11132 / Bath)).